A 1296-amino-acid chain; its full sequence is Phosphoribosylformylglycinamidine synthase (1296 aa).

The tract at residues 304–323 is disordered; that stretch reads WPGAATGSGGEIRDEGATGR. Residues 306–317 and alanine 677 each bind ATP; that span reads GAATGSGGEIRD. The Mg(2+) site is built by aspartate 678, glutamate 717, asparagine 721, and aspartate 885. Serine 887 contacts ATP. The span at 1000-1013 shows a compositional bias: basic and acidic residues; sequence PDCADQEHQAKQDE. A disordered region spans residues 1000 to 1019; the sequence is PDCADQEHQAKQDESDPGLN. One can recognise a Glutamine amidotransferase type-1 domain in the interval 1043 to 1296; it reads VAVLREQGVN…MFRNARKQLG (254 aa). The active-site Nucleophile is the cysteine 1136. Residues histidine 1261 and glutamate 1263 contribute to the active site.

In the N-terminal section; belongs to the FGAMS family. In terms of assembly, monomer.

It localises to the cytoplasm. It catalyses the reaction N(2)-formyl-N(1)-(5-phospho-beta-D-ribosyl)glycinamide + L-glutamine + ATP + H2O = 2-formamido-N(1)-(5-O-phospho-beta-D-ribosyl)acetamidine + L-glutamate + ADP + phosphate + H(+). Its pathway is purine metabolism; IMP biosynthesis via de novo pathway; 5-amino-1-(5-phospho-D-ribosyl)imidazole from N(2)-formyl-N(1)-(5-phospho-D-ribosyl)glycinamide: step 1/2. In terms of biological role, phosphoribosylformylglycinamidine synthase involved in the purines biosynthetic pathway. Catalyzes the ATP-dependent conversion of formylglycinamide ribonucleotide (FGAR) and glutamine to yield formylglycinamidine ribonucleotide (FGAM) and glutamate. The protein is Phosphoribosylformylglycinamidine synthase of Yersinia pestis bv. Antiqua (strain Nepal516).